The sequence spans 4293 residues: MPLGAPALLALALGLGLWLGALAGDPGRGCGPCPLPCFCGPAPDAACRVNCSGRWLQTLGPSLRIPADATALDLSHNLLQTLDIGLLVNLSALVELDLSNNRISTLEEGVFANLFNLSEINLSGNPFECNCGLAWLPRWAKEHQVHVVQSEATTCRGPIPLAGQPLLSIPLLDNACGEEYVACLPDNSSGAVAAVPFYFAHEGPLETEACSAFCFSAGEGLAALSEQNQCLCGAGQASNSSAACSSWCSSISLSLNSACGGPTLLQHTFPASPGATLVGPHGPLASGQPADFHITSSLPISSTRWNFGDGSPEVDMASPAATHFYVLPGSYHMTVVLALGAGSALLETEVQVEATPTVLELVCPSFVHSNESLELGIRHRGGSALEVTYSILALDKEPAQVVHPLCPLDTEIFPGNGHCYRLVAEKAPWLQAQEQCRTWAGAALAMVDSPAIQHFLVSKVTRSLDVWIGFSSVEGTEGLDPRGEAFSLESCQNWLPGEPHPATAEHCVRLGPAGQCNTDLCSAPHSYVCELRPGGPVWDTENFVMGMSGGGLSGPLHPLAQQETVQGPLRPVEVMVFPGLSPSREAFLTAAEFSTQKLEEPAQMRLQVYRPSGGAAAVPEGSSEPDNRTEPAPKCVPEELWCPGANVCIPFDASCNSHVCINGSVSRLGLSRASYTLWKEFFFSVPAGPPTQYLVTLHSQDVPMLPGDLIGLQHDAGPGTLLQCPLASSCPGQALYLSTNASDWMTNLPVHLEEAWAGPVCSLQLLLVTERLTPLLGLGPNPGLQHPGHYEVRATVGNSVSRQNLSCSFSVVSPIAGLRVIHPIPLDGHIYVPTNGSVLVLQVDSGANATATAQWFGGNISAPFEDACPPEVDFLKQDCTEEANGTLFSVLMLPRLKEGDHTVEIVAQNGASQANLSLRVTAEEPICGLRAVPSPEARVLQGILVRYSPMVEAGSDVAFRWTIDDKQSLTFHNTVFNVIYQSAAIFKLSLTASNHVSNITVNYNVTVERMNKMHGLWVSAVPTVLPPNATLALTGGVLVDSAVEVAFLWNFGDGEQVLRQFKPPYDESFQVPDPTVAQVLVEHNTTHIYTTPGEYNLTVLVSNTYENLTQQVTVSVRTVLPNVAIGMSSNVLVAGQPITFSPYPLPSTDGVLYTWDFGDGSPVLIQSQPVLNHTYSMTGAYRITLEVNNTVSSVTAHADIRVFQELHGLTVYLSPSVEQGAPMVVSASVESGDNITWTFDMGDGTVFTGPEATVQHVYLRAQNFTVTVEAANPAGHLSQSLHVQVFVLEVLHIEPSTCIPTQPSAQLMAHVTGDPVHYLFDWTFGDGSSNVTVHGHPSVTHNFTRSGIFPLALVLSSHVNKAHYFTSICVEPEIRNITLQPERQFVKLGDEARLVAYSWPPFPYRYTWDFGTEDTTHTQTGGSEVKFIYREPGSYLVIVTVSNNISSTNDSAFVEVQEPVLVTGIRINGSHVLELQQPYLLSAMGSGSPATYLWELGDGSQSEGPEVTHIYSSTGDFTVRVSGWNEVSRSEAQLNITVKQRVRGLTINASRTVVPLNGSVSFSTLLEVGSDVHYSWVLCDRCTPIPGGPTISYTFRSVGTFNIIVTAENEVGSAQDSIFIYVLQFIEGLQVAGGDNGCCFPTNYTLQLQAAVRDGTNISYSWTAQQEGSLITLFGSGKCFSLTSLKASTYYVHLRATNMLGSAAANRTIDFVEPVESLILSASPNPAAVNMSLTLCAELAGGSGVVYTWYLEEGLSWKTSMPSTTHTFAAPGLHLVRVTAENQLGSVNATVEVAIQVPVGGLSIRTSEPDSIFVAAGSTLPFWGQLAEGTNVTWCWTLPGGSKDSQYIAVRFSTAGSFSLQLNASNAVSWVSAMYNLTVEEPIVNLMLWASSKVVAPGQPVHFEILLAAGSALTFRLQVGGSVPEVLPSPHFSHSFFRVGDHLVNVQAENHVSHAQAQVRILVLEAVVGLQVPNCCEPGMATGTEKNFTARVQRGSRVAYAWYFSLQKVQGDSLVILSGRDVTYTPVAAGLLEIHVRAFNELGGVNLTLMVEVQDIIQYVTLQSGRCFTNRSARFEAATSPSPRRVTYHWDFGDGTPVQKTEEFWADHYYLRPGDYHVEVNATNLVSFFVAQATVTVQVLACREPEVEVALPLQVLMRRSQRNYLEAHVDLRNCVSYQTEYRWEIYRTASCQRPGRMAQMVLPGVDVSRPQLVVPRLALPVGHYCFVFVVSFGDTPLARSIQANVTVAAERLVPIIEGGSYRVWSDTQDLVLDGSKSYDPNLEDGDQTPLNFHWACVASTQSETGGCVLNFGPRGSSVVTIPLERLEAGVEYTFNLIVWKAGRKEEATNQTVLIRSGRVPIVSLECVSCKAQAVYEVSRSSYVYLEGHCHNCSRGYKQGCWAARTFSNKTLVLNETTTSTGSTGMNLVVRPGALRDGEGYIFTLTVLGHSGEEEGCASIRLSPNRPPLGGSCRLFPLDSVRGLTTKVHFECTGWRDAEDGGAPLVYALLLKRCRQSYCENFCIYKGSLSTYGAVLPPGFQPLFVVSLAVVVQDQLGAAVVALNRSLTIVLPEPSGNPADLVPWLHSLTASVLPGLLKQADPQHVIEYSLALITVLNEYEQAPDVSEPNVEQQLRAQMRKNITETLISLRVNTVDDIQQITAALAQCMVSSRELMCRSCLKKMLQKLEGMMRILQAETTEGTLTPTTIADSILNITGDLIHLASLDMQGPQPLELGVEPPSLMVASKAYNLSSALMRILMRSRVLNEEPLTLAGEEIVALGKRSDPLSLLCYGKALGPSCHFSIPEAFSGALSNLSDVVQLIFLVDSNPFPFGYISNYTVSTKVASMAFQTQTGTQIPIEQLAAERAITVKVPNNSDQAAQSSHNPVGSTIVQPQTSVSAVVTADNSNPQAGLHLRITYTVLNERYLSAEPEPYLAVYLHSVSQPNEYNCSASRRISLEVLEGADHRLYTFFIAPGTGTLDRSYYLNLTSHFHWSALEVSVGLYTSLCQYFSEEMMMWRTEGIVPLEETSPSQAVCLTRHLTAFGASLFVPPSHVQFIFPEPSASINYIVLLTCVICLVTYVVMAMILRKLDQLDVSRVRVIPFCGKGGRFKYEILVKTGWSRGSGTTAHVGIMLYGEDNRSGHRHLDGDRAFHRNSLDIFQIATPHSLGSVWKIRVWHDNKGLSPAWFLQHIIVRDLQSARSTFFLVNDWLSVETEANGGLVEKEVLAANEAALWQFQRLLVAELQRGFFDKHIWLSIWDRPPRSRFTRVQRVTCCVLLLCLFLAANAVWYGVVRDTTYSMGPVSSLISPGVDTVAIGLVSSVVVYPVYLAVLFLFRMSRSKVSGDQNPTPTGQQALDVDSYLDPSVLDSSLLTLSGLTEAFAGQVKNDLFLEDAKSLVCWPSSEGTLSWPDLLSDPSVVSSTLQRLTQGRPGCMLGSEEDGASLVSPSLPAKYLSASDEDLIHQVLADGANNLVPTQDTLLETDLLTSLSSVPGEKTETLILQTVGEERPASMGLSWEQSPVTRLSRTGLVEGFQKRLLPAWCAPLAHGLSLLLVAVAVAVSGWIGASFPPSVSVMWLLSSSSSFLASFLGWEPLKVLLEALYFSLVAKRLHPDEDDTLVESPAVTPVSERVPRVRPPHGFALFLAKEEARKVKRLHDMLKRLLVYMLFLLVTLLANYGDASCHGHAYRLQSAIKQELDSQAFLAITRSDEFWPWMSHVFLPYVHGNQSSPELGPPRLRQVRLQEAFCPDPSSSEHMCSAAGSLSTSDYGIGWQSVVQNGSETWAYSAPDLLGAWYWGYCAVYDSGGYIQELGLSLEESRARLGFLQLHNWLDSRSRAVFVELTRYSPAVGLHAAVTLRLEFPVAGHALAAFSVRPFALRRLSTGLSLPLLTSVCLLLFALYFSMAEVQTWRKDGCACTARPDTWARCLLVILTAATGLVRLAQLGIADRQWTHFVQDHPRHFTSFDQVAQLGSVARGLAASLLFLLLVKAAQQLRFVRQWSVFGKTLCRALPELMGATLGLVLLGVAYAQMAILLISSGADTLYNMARAFLVLCPGARVPTLCPSESWYLSPLLCVGLWALRVWGALRLGAILLRWRYHALRGELYRPAWEPQDYEMVELFLRRLRLWMGFSKVKEFRHKVRFEGMDPLPSRSSRGSKSSPVVLPPSSGSEASHPSTSSSQPDGPSASLSRSTLKLEPEPSRLHAVFESLLVQFDRLNQATEDVYQLEQQLQSLQGHGHNGPPSSPSPGCFPGSQPALPSRLSRASQGLDQTVGPNRVSLWPNNKVHPSST.

An N-terminal signal peptide occupies residues 1 to 23; the sequence is MPLGAPALLALALGLGLWLGALA. Residues 24–67 form the LRRNT domain; it reads GDPGRGCGPCPLPCFCGPAPDAACRVNCSGRWLQTLGPSLRIPA. Residues 24–3066 are Extracellular-facing; it reads GDPGRGCGPC…IFPEPSASIN (3043 aa). N-linked (GlcNAc...) asparagine glycans are attached at residues Asn50 and Asn89. LRR repeat units lie at residues 68-91 and 92-113; these read DATA…VNLS and ALVE…VFAN. 2 N-linked (GlcNAc...) asparagine glycosylation sites follow: Asn116 and Asn121. The LRRCT domain maps to 125–178; the sequence is NPFECNCGLAWLPRWAKEHQVHVVQSEATTCRGPIPLAGQPLLSIPLLDNACGE. The region spanning 177–271 is the WSC domain; the sequence is GEEYVACLPD…PTLLQHTFPA (95 aa). Asn187 and Asn239 each carry an N-linked (GlcNAc...) asparagine glycan. The 88-residue stretch at 272–359 folds into the PKD 1 domain; the sequence is SPGATLVGPH…VQVEATPTVL (88 aa). An N-linked (GlcNAc...) asparagine glycan is attached at Asn370. One can recognise a C-type lectin domain in the interval 415 to 530; that stretch reads GNGHCYRLVA…CSAPHSYVCE (116 aa). 2 disulfides stabilise this stretch: Cys436/Cys529 and Cys507/Cys521. The interval 613–632 is disordered; sequence GGAAAVPEGSSEPDNRTEPA. N-linked (GlcNAc...) asparagine glycosylation occurs at Asn627. One can recognise an LDL-receptor class A; atypical domain in the interval 633–666; that stretch reads PKCVPEELWCPGANVCIPFDASCNSHVCINGSVS. Cystine bridges form between Cys635–Cys648 and Cys642–Cys660. N-linked (GlcNAc...) asparagine glycosylation is found at Asn662, Asn740, Asn804, Asn835, Asn848, Asn859, Asn884, Asn915, Asn998, Asn1004, Asn1028, Asn1084, Asn1096, Asn1107, Asn1172, Asn1188, Asn1234, Asn1263, Asn1330, Asn1342, Asn1376, Asn1444, Asn1449, Asn1468, Asn1535, Asn1548, Asn1557, Asn1643, Asn1657, Asn1706, Asn1730, Asn1788, Asn1831, Asn1863, and Asn1876. PKD domains lie at 849–922, 929–1014, 1017–1123, 1121–1209, 1207–1292, 1288–1377, 1376–1463, 1462–1545, 1544–1629, 1630–1718, 1716–1802, 1804–1886, 1885–1970, 1972–2053, and 2056–2144; these read ATAT…RVTA, LRAV…NKMH, WVSA…LPNV, PNVA…LHGL, HGLT…EVLH, LEVL…IRNI, NITL…VLVT, VTGI…VRGL, GLTI…IEGL, QVAG…VESL, ESLI…VGGL, IRTS…IVNL, NLML…VVGL, VPNC…MVEV, and IIQY…ACRE. Asn1987, Asn2046, Asn2070, Asn2121, Asn2244, Asn2349, Asn2391, Asn2408, Asn2414, Asn2563, Asn2640, Asn2713, Asn2749, Asn2813, Asn2836, Asn2873, Asn2948, and Asn2986 each carry an N-linked (GlcNAc...) asparagine glycan. Residues 2142 to 2828 enclose the REJ domain; it reads CREPEVEVAL…QLIFLVDSNP (687 aa). In terms of domain architecture, GAIN-B spans 2857-3055; that stretch reads PIEQLAAERA…SLFVPPSHVQ (199 aa). Cysteines 3007 and 3035 form a disulfide. Residues 3007–3055 form a GPS region; that stretch reads CQYFSEEMMMWRTEGIVPLEETSPSQAVCLTRHLTAFGASLFVPPSHVQ. The chain crosses the membrane as a helical span at residues 3067 to 3087; the sequence is YIVLLTCVICLVTYVVMAMIL. Topologically, residues 3088–3269 are cytoplasmic; the sequence is RKLDQLDVSR…DRPPRSRFTR (182 aa). Residues 3110–3225 enclose the PLAT domain; it reads FKYEILVKTG…EANGGLVEKE (116 aa). The helical transmembrane segment at 3270–3290 threads the bilayer; sequence VQRVTCCVLLLCLFLAANAVW. Over 3291–3315 the chain is Extracellular; sequence YGVVRDTTYSMGPVSSLISPGVDTV. The helical transmembrane segment at 3316–3336 threads the bilayer; it reads AIGLVSSVVVYPVYLAVLFLF. At 3337–3549 the chain is on the cytoplasmic side; the sequence is RMSRSKVSGD…LPAWCAPLAH (213 aa). The chain crosses the membrane as a helical span at residues 3550-3570; sequence GLSLLLVAVAVAVSGWIGASF. At 3571-3572 the chain is on the extracellular side; sequence PP. The helical transmembrane segment at 3573–3593 threads the bilayer; the sequence is SVSVMWLLSSSSSFLASFLGW. Residues 3594-3655 lie on the Cytoplasmic side of the membrane; the sequence is EPLKVLLEAL…LAKEEARKVK (62 aa). The chain crosses the membrane as a helical span at residues 3656–3676; sequence RLHDMLKRLLVYMLFLLVTLL. Over 3677 to 3891 the chain is Extracellular; the sequence is ANYGDASCHG…RLSTGLSLPL (215 aa). N-linked (GlcNAc...) asparagine glycans are attached at residues Asn3728 and Asn3780. A helical transmembrane segment spans residues 3892–3912; sequence LTSVCLLLFALYFSMAEVQTW. Residues 3913–3925 lie on the Cytoplasmic side of the membrane; that stretch reads RKDGCACTARPDT. Residues 3926-3946 form a helical membrane-spanning segment; the sequence is WARCLLVILTAATGLVRLAQL. Residues 3947-3974 are Extracellular-facing; sequence GIADRQWTHFVQDHPRHFTSFDQVAQLG. The chain crosses the membrane as a helical span at residues 3975–3995; that stretch reads SVARGLAASLLFLLLVKAAQQ. Residues 3996-4017 lie on the Cytoplasmic side of the membrane; that stretch reads LRFVRQWSVFGKTLCRALPELM. Residues 4018–4038 form a helical membrane-spanning segment; sequence GATLGLVLLGVAYAQMAILLI. Residues 4039 to 4080 lie on the Extracellular side of the membrane; the sequence is SSGADTLYNMARAFLVLCPGARVPTLCPSESWYLSPLLCVGL. Residues 4081 to 4100 form a helical membrane-spanning segment; it reads WALRVWGALRLGAILLRWRY. The Cytoplasmic portion of the chain corresponds to 4101–4293; that stretch reads HALRGELYRP…PNNKVHPSST (193 aa). 2 disordered regions span residues 4150–4197 and 4235–4293; these read PLPS…STLK and SLQG…PSST. A compositionally biased stretch (low complexity) spans 4153–4172; that stretch reads SRSSRGSKSSPVVLPPSSGS. Ser4156 is subject to Phosphoserine; by PRKX; in vitro. Residues 4173-4195 show a composition bias toward polar residues; it reads EASHPSTSSSQPDGPSASLSRST. Positions 4210–4241 form a coiled coil; the sequence is ESLLVQFDRLNQATEDVYQLEQQLQSLQGHGH. Residues 4238 to 4256 show a composition bias toward low complexity; sequence GHGHNGPPSSPSPGCFPGS. The span at 4265 to 4276 shows a compositional bias: polar residues; it reads SRASQGLDQTVG.

Belongs to the polycystin family. Component of the heterotetrameric polycystin channel complex with PKD2; the tetramer contains one PKD1 chain and three PKD2 chains. Interacts with PKD2; the interaction is required for ciliary localization. Interacts with PKD2L1. Interacts with PRKX; involved in differentiation and controlled morphogenesis of the kidney. Interacts (via extracellular domain) with WNT3A, WNT4 and WNT9B. Interacts with WNT5A, DVL1 and DVL2. Interacts with NPHP1 (via SH3 domain). Interacts with BBS1, BBS4, BBS5 and TTC8. Interacts with RGS7. Interacts (via C-terminal domain) with RABEP1; the interaction connects PKD1:PKD2 to GGA1 and ARL3 that mediate the ciliary targeting. Interacts (via the PKD repeats in the N-terminal extracellular region) with EPCIP; the interaction is not dependent on N-glycosylation of either protein. Post-translationally, N-glycosylated. In terms of processing, after synthesis, undergoes autoproteolytic cleavage between Leu-3040 and Thr-3041 in the GPS region of the GAIN-B domain. Cleavage at the GPS region occurs through a cis-autoproteolytic mechanism involving an ester-intermediate via N-O acyl rearrangement. This process takes place in the early secretory pathway, depends on initial N-glycosylation, and requires the REJ domain. PKD1 is ubiquitously and incompletely cleaved in wild-type mice, so that uncleaved and cleaved PKD1 molecules coexist. The differential patterns of cleavage during embryonic development, as well as in adult mice, suggest different functions of uncleaved and cleaved molecules.

It localises to the cell membrane. It is found in the cell projection. The protein resides in the cilium. Its subcellular location is the endoplasmic reticulum. The protein localises to the golgi apparatus. It localises to the vesicle. It is found in the secreted. The protein resides in the extracellular exosome. Component of a heteromeric calcium-permeable ion channel formed by PKD1 and PKD2 that is activated by interaction between PKD1 and a Wnt family member, such as WNT3A and WNT9B. Both PKD1 and PKD2 are required for channel activity. Involved in renal tubulogenesis. Involved in fluid-flow mechanosensation by the primary cilium in renal epithelium. Acts as a regulator of cilium length, together with PKD2. The dynamic control of cilium length is essential in the regulation of mechanotransductive signaling. The cilium length response creates a negative feedback loop whereby fluid shear-mediated deflection of the primary cilium, which decreases intracellular cAMP, leads to cilium shortening and thus decreases flow-induced signaling. May be an ion-channel regulator. Involved in adhesive protein-protein and protein-carbohydrate interactions. Likely to be involved with polycystin-1-interacting protein 1 in the detection, sequestration and exocytosis of senescent mitochondria. The polypeptide is Polycystin-1 (Mus musculus (Mouse)).